Reading from the N-terminus, the 302-residue chain is Oxaloacetate decarboxylase 2 (302 aa).

Ser50 is a binding site for substrate. Mg(2+) is bound at residue Asp88. Positions 159 and 235 each coordinate substrate.

The protein belongs to the isocitrate lyase/PEP mutase superfamily. Oxaloacetate decarboxylase family. As to quaternary structure, homotetramer; dimer of dimers. It depends on Mg(2+) as a cofactor.

It carries out the reaction oxaloacetate + H(+) = pyruvate + CO2. Functionally, catalyzes the decarboxylation of oxaloacetate into pyruvate. Seems to play a role in maintaining cellular concentrations of bicarbonate and pyruvate. This is Oxaloacetate decarboxylase 2 from Pseudomonas putida (strain W619).